A 510-amino-acid polypeptide reads, in one-letter code: Chromosomal replication initiator protein DnaA (510 aa).

The interval 1–87 (MSVELWQQCV…IGSRRSSAPR (87 aa)) is domain I, interacts with DnaA modulators. The interval 87–173 (RAAPNAPVSA…QVEGALKHTS (87 aa)) is domain II. The segment at 140-160 (DSFDAMAEPASAPASSGRAEQ) is disordered. Low complexity predominate over residues 144–157 (AMAEPASAPASSGR). A domain III, AAA+ region region spans residues 174-390 (YLNRTFTFDT…GALKRVIAHS (217 aa)). Residues glycine 218, glycine 220, lysine 221, and threonine 222 each coordinate ATP. Residues 391–510 (HFMGRDITIE…YKNLLRTLTT (120 aa)) form a domain IV, binds dsDNA region.

Belongs to the DnaA family. As to quaternary structure, oligomerizes as a right-handed, spiral filament on DNA at oriC.

The protein resides in the cytoplasm. Plays an essential role in the initiation and regulation of chromosomal replication. ATP-DnaA binds to the origin of replication (oriC) to initiate formation of the DNA replication initiation complex once per cell cycle. Binds the DnaA box (a 9 base pair repeat at the origin) and separates the double-stranded (ds)DNA. Forms a right-handed helical filament on oriC DNA; dsDNA binds to the exterior of the filament while single-stranded (ss)DNA is stabiized in the filament's interior. The ATP-DnaA-oriC complex binds and stabilizes one strand of the AT-rich DNA unwinding element (DUE), permitting loading of DNA polymerase. After initiation quickly degrades to an ADP-DnaA complex that is not apt for DNA replication. Binds acidic phospholipids. The sequence is that of Chromosomal replication initiator protein DnaA from Pseudomonas putida (strain GB-1).